The primary structure comprises 249 residues: uncharacterized protein (249 aa).

The protein belongs to the chlamydial CPn_0206/CT203/TC_0475 family.

This is an uncharacterized protein from Chlamydia muridarum (strain MoPn / Nigg).